Here is a 154-residue protein sequence, read N- to C-terminus: MLEESKALFLELYKEKKKNEWLDAWTDEVMSLVQQQYSNYKLDGILQEAARHDLLPVIENYITRGGNLHIVVLDECGEKVNILNVAAANNSVTVINYLLDNNIFNVDQRVSENSRTALHSAVKENAMESTKFLLKKEQILILNLNINISDLKVK.

ANK repeat units follow at residues 78–108 (EKVNILNVAAANNSVTVINYLLDNNIFNVDQ) and 113–142 (NSRTALHSAVKENAMESTKFLLKKEQILIL).

The sequence is that of Putative ankyrin repeat protein RBE_1220 from Rickettsia bellii (strain RML369-C).